We begin with the raw amino-acid sequence, 504 residues long: Cytochrome P450 71B4 (504 aa).

A helical membrane pass occupies residues methionine 1–phenylalanine 21. Cysteine 446 lines the heme pocket.

This sequence belongs to the cytochrome P450 family. Heme is required as a cofactor.

Its subcellular location is the membrane. This is Cytochrome P450 71B4 (CYP71B4) from Arabidopsis thaliana (Mouse-ear cress).